The primary structure comprises 20 residues: Cytochrome c oxidase subunit 8B, mitochondrial (20 aa).

The tract at residues Leu-1–Thr-20 is disordered.

This sequence belongs to the cytochrome c oxidase VIII family. As to quaternary structure, component of the cytochrome c oxidase (complex IV, CIV), a multisubunit enzyme composed of 14 subunits. The complex is composed of a catalytic core of 3 subunits MT-CO1, MT-CO2 and MT-CO3, encoded in the mitochondrial DNA, and 11 supernumerary subunits COX4I, COX5A, COX5B, COX6A, COX6B, COX6C, COX7A, COX7B, COX7C, COX8 and NDUFA4, which are encoded in the nuclear genome. The complex exists as a monomer or a dimer and forms supercomplexes (SCs) in the inner mitochondrial membrane with NADH-ubiquinone oxidoreductase (complex I, CI) and ubiquinol-cytochrome c oxidoreductase (cytochrome b-c1 complex, complex III, CIII), resulting in different assemblies (supercomplex SCI(1)III(2)IV(1) and megacomplex MCI(2)III(2)IV(2)).

It is found in the mitochondrion inner membrane. Its pathway is energy metabolism; oxidative phosphorylation. In terms of biological role, component of the cytochrome c oxidase, the last enzyme in the mitochondrial electron transport chain which drives oxidative phosphorylation. The respiratory chain contains 3 multisubunit complexes succinate dehydrogenase (complex II, CII), ubiquinol-cytochrome c oxidoreductase (cytochrome b-c1 complex, complex III, CIII) and cytochrome c oxidase (complex IV, CIV), that cooperate to transfer electrons derived from NADH and succinate to molecular oxygen, creating an electrochemical gradient over the inner membrane that drives transmembrane transport and the ATP synthase. Cytochrome c oxidase is the component of the respiratory chain that catalyzes the reduction of oxygen to water. Electrons originating from reduced cytochrome c in the intermembrane space (IMS) are transferred via the dinuclear copper A center (CU(A)) of subunit 2 and heme A of subunit 1 to the active site in subunit 1, a binuclear center (BNC) formed by heme A3 and copper B (CU(B)). The BNC reduces molecular oxygen to 2 water molecules using 4 electrons from cytochrome c in the IMS and 4 protons from the mitochondrial matrix. In Oncorhynchus mykiss (Rainbow trout), this protein is Cytochrome c oxidase subunit 8B, mitochondrial.